Here is a 312-residue protein sequence, read N- to C-terminus: Protein-methionine-sulfoxide reductase catalytic subunit MsrP (312 aa).

Residues 1–42 constitute a signal peptide (tat-type signal); it reads MALFRYPRPLPSEITPRDMYLSRRSLIGGAAALGAVSATADA. Mo-molybdopterin-binding positions include N68, 71–72, C126, S161, N211, R216, and 227–229; these read YE and GIK.

The protein belongs to the MsrP family. Heterodimer of a catalytic subunit (MsrP) and a heme-binding subunit (MsrQ). Mo-molybdopterin serves as cofactor. In terms of processing, predicted to be exported by the Tat system. The position of the signal peptide cleavage has not been experimentally proven.

It localises to the periplasm. It carries out the reaction L-methionyl-[protein] + a quinone + H2O = L-methionyl-(S)-S-oxide-[protein] + a quinol. The enzyme catalyses L-methionyl-[protein] + a quinone + H2O = L-methionyl-(R)-S-oxide-[protein] + a quinol. Its function is as follows. Part of the MsrPQ system that repairs oxidized periplasmic proteins containing methionine sulfoxide residues (Met-O), using respiratory chain electrons. Thus protects these proteins from oxidative-stress damage caused by reactive species of oxygen and chlorine generated by the host defense mechanisms. MsrPQ is essential for the maintenance of envelope integrity under bleach stress, rescuing a wide series of structurally unrelated periplasmic proteins from methionine oxidation. The catalytic subunit MsrP is non-stereospecific, being able to reduce both (R-) and (S-) diastereoisomers of methionine sulfoxide. The chain is Protein-methionine-sulfoxide reductase catalytic subunit MsrP from Gluconobacter oxydans (strain 621H) (Gluconobacter suboxydans).